We begin with the raw amino-acid sequence, 837 residues long: MTEKEQNAENAPKKLSLKRREKTTVSATTAGGKAKAVQVEVRKSRKIDTEAAIKAAEAAKLKAQEEAEAKAKAEAEKAEQEKATAAKVREKAAKPTKAEAKPENSTVAKAADPEKEKRKAEEAELRRKADELARQKAEEQARKAAEDAKRYAEAAKDTVEHHNDSDDFSDYHLTSSYAREAEDEDNRRRENHIRTGKNKVTKAKKGGRDDNGSKDERSADRRNQKDMRGKGKQSKQGKRGSTLQQAFTKPAQVTKSDVVIGETITVAELANKMAIKATEIIKTMMKMGEMVTINQVLDQETAQLVAEELGHKVILRKENELEESVLEDRDVNAEKVQRAPVVTIMGHVDHGKTSLLDYIRKAKVAAGEAGGITQHIGAYHVETKGKIITFLDTPGHAAFTSMRARGAKATDIVVLVVAADDGVMPQTIEAIQHARAAGVPIVVAVNKIDKPEANPERVEQELLQYDVVAEKFGGDVQFVYVSAKKGSGVDDLLDAILLQSEVLELTAVKDGMASGVVIESYLDKGRGPVATILVQSGTLKRGDIVLCGFEFGRVRAMRDEDGKDINEAGPSIPVEVLGLSGVPAAGDEATVVRDEKKAREVALYRQGKFREVKLARQQKAKLENMFSNMSEGDVAELNVIVKADVQGSVEAIVQSLQELSTEEVKVKVVGSGVGGITETDATLAAASNAIMVGFNVRADASARRVIENENIDLRYYSIIYELLNEIKAAMSGMLQPEFKQEIIGLAEVRDIFRHPKFGAIAGCMVTEGIVKRNNPIRVLRDNVVIFEGELESLRRFKDDVNEVRNGMECGIGVKNYNDVKVGDQIEVFEVVEVKRSI.

Disordered regions lie at residues 1–44 (MTEK…VRKS) and 62–251 (KAQE…TKPA). 2 stretches are compositionally biased toward basic and acidic residues: residues 62–102 (KAQE…EAKP) and 111–165 (ADPE…HNDS). The segment covering 189 to 205 (RENHIRTGKNKVTKAKK) has biased composition (basic residues). Positions 206 to 229 (GGRDDNGSKDERSADRRNQKDMRG) are enriched in basic and acidic residues. Polar residues predominate over residues 242–251 (TLQQAFTKPA). Positions 337-506 (QRAPVVTIMG…LLQSEVLELT (170 aa)) constitute a tr-type G domain. A G1 region spans residues 346-353 (GHVDHGKT). 346-353 (GHVDHGKT) is a GTP binding site. Positions 371 to 375 (GITQH) are G2. Positions 392–395 (DTPG) are G3. GTP contacts are provided by residues 392 to 396 (DTPGH) and 446 to 449 (NKID). The interval 446-449 (NKID) is G4. The tract at residues 482-484 (SAK) is G5.

This sequence belongs to the TRAFAC class translation factor GTPase superfamily. Classic translation factor GTPase family. IF-2 subfamily.

The protein resides in the cytoplasm. Its function is as follows. One of the essential components for the initiation of protein synthesis. Protects formylmethionyl-tRNA from spontaneous hydrolysis and promotes its binding to the 30S ribosomal subunits. Also involved in the hydrolysis of GTP during the formation of the 70S ribosomal complex. The chain is Translation initiation factor IF-2 from Actinobacillus succinogenes (strain ATCC 55618 / DSM 22257 / CCUG 43843 / 130Z).